Consider the following 109-residue polypeptide: Flagellar hook-basal body complex protein FliE (109 aa).

This sequence belongs to the FliE family.

Its subcellular location is the bacterial flagellum basal body. The protein is Flagellar hook-basal body complex protein FliE of Pseudomonas fluorescens (strain Pf0-1).